We begin with the raw amino-acid sequence, 288 residues long: Acetyl-coenzyme A carboxylase carboxyl transferase subunit beta (288 aa).

In terms of domain architecture, CoA carboxyltransferase N-terminal spans 34-288; sequence LFAKCPGCKQ…TLLSFHGGVQ (255 aa). 4 residues coordinate Zn(2+): C38, C41, C56, and C59. Residues 38 to 59 form a C4-type zinc finger; the sequence is CPGCKQAIYQKDLGQAKICPNC.

This sequence belongs to the AccD/PCCB family. In terms of assembly, acetyl-CoA carboxylase is a heterohexamer composed of biotin carboxyl carrier protein (AccB), biotin carboxylase (AccC) and two subunits each of ACCase subunit alpha (AccA) and ACCase subunit beta (AccD). The cofactor is Zn(2+).

The protein localises to the cytoplasm. It catalyses the reaction N(6)-carboxybiotinyl-L-lysyl-[protein] + acetyl-CoA = N(6)-biotinyl-L-lysyl-[protein] + malonyl-CoA. It functions in the pathway lipid metabolism; malonyl-CoA biosynthesis; malonyl-CoA from acetyl-CoA: step 1/1. In terms of biological role, component of the acetyl coenzyme A carboxylase (ACC) complex. Biotin carboxylase (BC) catalyzes the carboxylation of biotin on its carrier protein (BCCP) and then the CO(2) group is transferred by the transcarboxylase to acetyl-CoA to form malonyl-CoA. This chain is Acetyl-coenzyme A carboxylase carboxyl transferase subunit beta, found in Streptococcus thermophilus (strain ATCC BAA-491 / LMD-9).